Here is a 412-residue protein sequence, read N- to C-terminus: Class E basic helix-loop-helix protein 40 (412 aa).

Residues methionine 1 to glutamate 21 form a disordered region. Residues methionine 1–glutamine 139 form an essential for interaction with BMAL1, E-box binding and repressor activity against the CLOCK-BMAL1 heterodimer region. The bHLH domain maps to threonine 52–leucine 107. The tract at residues leucine 75–leucine 79 is necessary for interaction with RXRA and repressor activity against RXRA. One can recognise an Orange domain in the interval phenylalanine 142–leucine 175. Lysine 159 is covalently cross-linked (Glycyl lysine isopeptide (Lys-Gly) (interchain with G-Cter in SUMO1, SUMO2 and SUMO3)). Lysine 167 participates in a covalent cross-link: Glycyl lysine isopeptide (Lys-Gly) (interchain with G-Cter in SUMO2). 2 disordered regions span residues leucine 182 to glutamate 257 and lysine 279 to glutamate 298. Serine 235 bears the Phosphoserine mark. Residues glutamate 248–glutamate 257 are compositionally biased toward basic and acidic residues. Lysine 279 is covalently cross-linked (Glycyl lysine isopeptide (Lys-Gly) (interchain with G-Cter in SUMO1); alternate). A Glycyl lysine isopeptide (Lys-Gly) (interchain with G-Cter in SUMO1, SUMO2 and SUMO3); alternate cross-link involves residue lysine 279. Residue lysine 279 forms a Glycyl lysine isopeptide (Lys-Gly) (interchain with G-Cter in SUMO2); alternate linkage. A Glycyl lysine isopeptide (Lys-Gly) (interchain with G-Cter in SUMO2) cross-link involves residue lysine 288. The residue at position 383 (serine 383) is a Phosphoserine.

In terms of assembly, homodimer. Heterodimer with BHLHE41/DEC2. Interacts with TCF3/E47. Interacts with ubiquitin-conjugating enzyme UBE2I/UBC9. Interacts with HDAC1, SUMO1, RXRA and BMAL1. Ubiquitinated; which may lead to proteasomal degradation. In terms of processing, sumoylation inhibits its ubiquitination and promotes its negative regulation of the CLOCK-BMAL1 heterodimer transcriptional activator activity.

It localises to the cytoplasm. The protein localises to the nucleus. Its function is as follows. Transcriptional repressor involved in the regulation of the circadian rhythm by negatively regulating the activity of the clock genes and clock-controlled genes. Acts as the negative limb of a novel autoregulatory feedback loop (DEC loop) which differs from the one formed by the PER and CRY transcriptional repressors (PER/CRY loop). Both these loops are interlocked as it represses the expression of PER1/2 and in turn is repressed by PER1/2 and CRY1/2. Represses the activity of the circadian transcriptional activator: CLOCK-BMAL1|BMAL2 heterodimer by competing for the binding to E-box elements (5'-CACGTG-3') found within the promoters of its target genes. Negatively regulates its own expression and the expression of DBP and BHLHE41/DEC2. Acts as a corepressor of RXR and the RXR-LXR heterodimers and represses the ligand-induced RXRA and NR1H3/LXRA transactivation activity. May be involved in the regulation of chondrocyte differentiation via the cAMP pathway. Represses the transcription of NR0B2 and attentuates the transactivation of NR0B2 by the CLOCK-BMAL1 complex. Drives the circadian rhythm of blood pressure through transcriptional repression of ATP1B1 in the cardiovascular system. In Ovis aries (Sheep), this protein is Class E basic helix-loop-helix protein 40 (BHLHE40).